Here is a 282-residue protein sequence, read N- to C-terminus: Putative phosphoesterase 244L (282 aa).

Residues aspartate 45, asparagine 80, and histidine 203 each contribute to the a divalent metal cation site.

It belongs to the metallophosphoesterase superfamily. IIV-6 244L family.

This Invertebrate iridescent virus 6 (IIV-6) protein is Putative phosphoesterase 244L.